The chain runs to 469 residues: Actin-related protein 4 (469 aa).

The tract at residues 104-136 (PERSTPPSKKGINISDDGDVPMEDDGNNNEDAT) is disordered. Residues 119-136 (DDGDVPMEDDGNNNEDAT) are compositionally biased toward acidic residues.

This sequence belongs to the actin family. ARP4 subfamily. Component of the NuA4 histone acetyltransferase complex, of the INO80 chromatin remodeling complex, and of the SWR1 chromatin remodeling complex.

The protein localises to the nucleus. Chromatin interaction component of the NuA4 histone acetyltransferase complex which is involved in transcriptional activation of selected genes principally by acetylation of nucleosomal histone H4 and H2A. The NuA4 complex is also involved in DNA repair. Is required for NuA4 complex integrity. Component of the SWR1 complex which mediates the ATP-dependent exchange of histone H2A for the H2A variant H2A.Z leading to transcriptional regulation of selected genes by chromatin remodeling. Component of the INO80 complex which remodels chromatin by shifting nucleosomes and is involved in DNA repair. This is Actin-related protein 4 (arp-4) from Neurospora crassa (strain ATCC 24698 / 74-OR23-1A / CBS 708.71 / DSM 1257 / FGSC 987).